The sequence spans 112 residues: MMATKEEISMVGFALVAYAGDARTAAVHALDAAEAGDFDKANELVEKAQQDINEAHNQQTQLLSQEAGGAEMDVTFIMVHGQDTLMTTMLLIDETRYMIRMFKRIKELENKQ.

The 99-residue stretch at 6–104 folds into the PTS EIIA type-3 domain; it reads EEISMVGFAL…TRYMIRMFKR (99 aa). His-80 serves as the catalytic Tele-phosphohistidine intermediate. His-80 is modified (phosphohistidine; by HPr). Asp-83 contacts Mg(2+).

As to quaternary structure, homotrimer. The cofactor is Mg(2+).

The protein resides in the cytoplasm. In terms of biological role, the phosphoenolpyruvate-dependent sugar phosphotransferase system (sugar PTS), a major carbohydrate active transport system, catalyzes the phosphorylation of incoming sugar substrates concomitantly with their translocation across the cell membrane. The enzyme II LacEF PTS system is involved in lactose transport. In Lacticaseibacillus casei (Lactobacillus casei), this protein is PTS system lactose-specific EIIA component.